Consider the following 510-residue polypeptide: Glucose-6-phosphate 1-dehydrogenase (510 aa).

Residues 29–36, R63, and K164 each bind NADP(+); that span reads GASGDLAK. D-glucose 6-phosphate is bound by residues K164, 194–198, E232, and D251; that span reads HYLGK. H256 acts as the Proton acceptor in catalysis. NADP(+) is bound at residue K347. K350 contacts D-glucose 6-phosphate. NADP(+) is bound by residues K356, R360, and R382. Q384 contributes to the D-glucose 6-phosphate binding site. Residues 390-392, 410-412, and R477 contribute to the NADP(+) site; these read YIK and DLT.

Belongs to the glucose-6-phosphate dehydrogenase family.

It catalyses the reaction D-glucose 6-phosphate + NADP(+) = 6-phospho-D-glucono-1,5-lactone + NADPH + H(+). It participates in carbohydrate degradation; pentose phosphate pathway; D-ribulose 5-phosphate from D-glucose 6-phosphate (oxidative stage): step 1/3. Catalyzes the rate-limiting step of the oxidative pentose-phosphate pathway, which represents a route for the dissimilation of carbohydrates besides glycolysis. The main function of this enzyme is to provide reducing power (NADPH) and pentose phosphates for fatty acid and nucleic acid synthesis. This Aspergillus niger protein is Glucose-6-phosphate 1-dehydrogenase (gsdA).